An 845-amino-acid polypeptide reads, in one-letter code: Translation initiation factor IF-2 (845 aa).

2 stretches are compositionally biased toward basic and acidic residues: residues 139–198 (EAKR…EKPA) and 206–228 (FRSEDRESEQKQRGTKFGRKELH). The tract at residues 139–253 (EAKRQAAEEE…PQKAAPAAKH (115 aa)) is disordered. A tr-type G domain is found at 345–512 (SRAAVVTIMG…AILLQAEVME (168 aa)). The tract at residues 354-361 (GHVDHGKT) is G1. 354–361 (GHVDHGKT) is a binding site for GTP. The segment at 379 to 383 (GITQH) is G2. Residues 400–403 (DTPG) form a G3 region. Residues 400–404 (DTPGH) and 454–457 (NKID) contribute to the GTP site. A G4 region spans residues 454–457 (NKID). The segment at 490–492 (SAK) is G5.

This sequence belongs to the TRAFAC class translation factor GTPase superfamily. Classic translation factor GTPase family. IF-2 subfamily.

The protein resides in the cytoplasm. Its function is as follows. One of the essential components for the initiation of protein synthesis. Protects formylmethionyl-tRNA from spontaneous hydrolysis and promotes its binding to the 30S ribosomal subunits. Also involved in the hydrolysis of GTP during the formation of the 70S ribosomal complex. The chain is Translation initiation factor IF-2 from Nitrosococcus oceani (strain ATCC 19707 / BCRC 17464 / JCM 30415 / NCIMB 11848 / C-107).